We begin with the raw amino-acid sequence, 394 residues long: Elongation factor Tu (394 aa).

One can recognise a tr-type G domain in the interval 10 to 204 (KPHVNVGTIG…ALDSYIPEPE (195 aa)). Positions 19 to 26 (GHVDHGKT) are G1. Position 19–26 (19–26 (GHVDHGKT)) interacts with GTP. Residue Thr26 coordinates Mg(2+). Residues 60-64 (GITIN) form a G2 region. The interval 81-84 (DCPG) is G3. Residues 81-85 (DCPGH) and 136-139 (NKCD) contribute to the GTP site. Residues 136-139 (NKCD) form a G4 region. A G5 region spans residues 174–176 (SAL).

Belongs to the TRAFAC class translation factor GTPase superfamily. Classic translation factor GTPase family. EF-Tu/EF-1A subfamily. As to quaternary structure, monomer.

The protein resides in the cytoplasm. It carries out the reaction GTP + H2O = GDP + phosphate + H(+). In terms of biological role, GTP hydrolase that promotes the GTP-dependent binding of aminoacyl-tRNA to the A-site of ribosomes during protein biosynthesis. This Shewanella amazonensis (strain ATCC BAA-1098 / SB2B) protein is Elongation factor Tu.